The sequence spans 316 residues: Pseudouridine-5'-phosphate glycosidase (316 aa).

Glu31 acts as the Proton donor in catalysis. Positions 92 and 112 each coordinate substrate. Asp144 is a Mn(2+) binding site. 146–148 (SAD) is a substrate binding site. Lys165 functions as the Nucleophile in the catalytic mechanism.

The protein belongs to the pseudouridine-5'-phosphate glycosidase family. Homotrimer. Mn(2+) serves as cofactor.

It carries out the reaction D-ribose 5-phosphate + uracil = psi-UMP + H2O. Catalyzes the reversible cleavage of pseudouridine 5'-phosphate (PsiMP) to ribose 5-phosphate and uracil. Functions biologically in the cleavage direction, as part of a pseudouridine degradation pathway. Part of an operon that could be involved in the biosynthesis of the blue pigment indigoidine, which is implicated in pathogenicity and protection from oxidative stress. This chain is Pseudouridine-5'-phosphate glycosidase, found in Dickeya dadantii (strain 3937) (Erwinia chrysanthemi (strain 3937)).